The sequence spans 371 residues: Putative glutamate--cysteine ligase 2 (371 aa).

The protein belongs to the glutamate--cysteine ligase type 2 family. YbdK subfamily.

It catalyses the reaction L-cysteine + L-glutamate + ATP = gamma-L-glutamyl-L-cysteine + ADP + phosphate + H(+). ATP-dependent carboxylate-amine ligase which exhibits weak glutamate--cysteine ligase activity. In Paraburkholderia xenovorans (strain LB400), this protein is Putative glutamate--cysteine ligase 2.